The primary structure comprises 79 residues: uncharacterized protein (79 aa).

This is an uncharacterized protein from Helicobacter pylori (strain ATCC 700392 / 26695) (Campylobacter pylori).